Consider the following 510-residue polypeptide: MKDILQELENRRAIARAGGGQRRVEAQHKRGKLTARERIELLLDEGSFEEFDMFVRHRCTDFGMQDDRPAGDGVVTGWGTINGRMVYVFSQDFTVFGGSLSETHAQKICKIMDMAMQNGAPVIGLNDSGGARIQEGVASLAGYADVFQRNIMASGVIPQISVIMGPCAGGAVYSPAMTDFIFMVRDTSYMFVTGPDVVKTVTNEVVTAEELGGASTHTKKSSVADGAFENDVEALYEIRRLVDFLPLSNRTPAPVRPFFDDVARIEDSLDTLIPDNPNQPYDMKELILKIADEADFYEIQKDFAANIITGFIRLEGQTVGVVANQPMVLAGCLDIDSSRKAARFVRFCDAFNIPILTLVDVPGFLPGTGQEYGGVIKHGAKLLFAYGEATVPKVTVITRKAYGGAYDVMASKHLRGDFNYAWPTAEIAVMGAKGATEILYRSELGDKEKIAARAKEYEDRFANPFVAAERGFIDEVIMPHSTRRRVSKAFASLRNKKLANPWKKHDNIPL.

The CoA carboxyltransferase N-terminal domain occupies 1–257; that stretch reads MKDILQELEN…SNRTPAPVRP (257 aa). Positions 1 to 504 are carboxyltransferase; sequence MKDILQELEN…NKKLANPWKK (504 aa). The 241-residue stretch at 264–504 folds into the CoA carboxyltransferase C-terminal domain; the sequence is RIEDSLDTLI…NKKLANPWKK (241 aa).

The protein belongs to the AccD/PCCB family. In terms of assembly, probably a dodecamer composed of six biotin-containing alpha subunits and six beta subunits.

The catalysed reaction is propanoyl-CoA + hydrogencarbonate + ATP = (S)-methylmalonyl-CoA + ADP + phosphate + H(+). Its pathway is metabolic intermediate metabolism; propanoyl-CoA degradation; succinyl-CoA from propanoyl-CoA: step 1/3. The polypeptide is Propionyl-CoA carboxylase beta chain (Cereibacter sphaeroides (strain ATCC 17023 / DSM 158 / JCM 6121 / CCUG 31486 / LMG 2827 / NBRC 12203 / NCIMB 8253 / ATH 2.4.1.) (Rhodobacter sphaeroides)).